Consider the following 400-residue polypeptide: Phosphoglycerate kinase (400 aa).

Substrate is bound by residues 22-24 (DFN), R38, 61-64 (HLGR), R119, and R152. Residues K205, G296, E327, and 353–356 (GGDT) contribute to the ATP site.

Belongs to the phosphoglycerate kinase family. Monomer.

The protein resides in the cytoplasm. The catalysed reaction is (2R)-3-phosphoglycerate + ATP = (2R)-3-phospho-glyceroyl phosphate + ADP. It participates in carbohydrate degradation; glycolysis; pyruvate from D-glyceraldehyde 3-phosphate: step 2/5. In Campylobacter jejuni subsp. jejuni serotype O:2 (strain ATCC 700819 / NCTC 11168), this protein is Phosphoglycerate kinase.